We begin with the raw amino-acid sequence, 414 residues long: Tyrosine--tRNA ligase (414 aa).

Residue Tyr-38 coordinates L-tyrosine. The short motif at 43 to 52 (CTARSLHIGS) is the 'HIGH' region element. Positions 172 and 176 each coordinate L-tyrosine. Positions 232–236 (KMGKT) match the 'KMSKS' region motif. Position 235 (Lys-235) interacts with ATP. The 68-residue stretch at 345 to 412 (ISVAKLLQLA…GKKRRIKVVV (68 aa)) folds into the S4 RNA-binding domain.

The protein belongs to the class-I aminoacyl-tRNA synthetase family. TyrS type 1 subfamily. Homodimer.

It is found in the cytoplasm. The enzyme catalyses tRNA(Tyr) + L-tyrosine + ATP = L-tyrosyl-tRNA(Tyr) + AMP + diphosphate + H(+). Catalyzes the attachment of tyrosine to tRNA(Tyr) in a two-step reaction: tyrosine is first activated by ATP to form Tyr-AMP and then transferred to the acceptor end of tRNA(Tyr). This Anaplasma marginale (strain St. Maries) protein is Tyrosine--tRNA ligase.